Consider the following 375-residue polypeptide: Platelet-derived growth factor receptor-like protein (375 aa).

Residues 1 to 17 (MKVWLLLGLLLLHEALG) form the signal peptide. Residues 19–63 (VAGQHPPKNKRPKEQGENRIKPTNKKAKPKIPKIKDRDTADSAPK) form a disordered region. Over residues 40 to 50 (PTNKKAKPKIP) the composition is skewed to basic residues. Residues 62-159 (PKSQSIMMQA…GYICRRDEAR (98 aa)) enclose the Ig-like C2-type 1 domain. A disulfide bridge links Cys96 with Cys143. Asn219 carries an N-linked (GlcNAc...) asparagine glycan. The Ig-like C2-type 2 domain occupies 272–375 (PSTTILASSN…TTVATTVEFS (104 aa)). A disulfide bridge links Cys293 with Cys357.

Forms a complex composed of PDGFRL, TNK2 and GRB2.

Its subcellular location is the secreted. The sequence is that of Platelet-derived growth factor receptor-like protein (Pdgfrl) from Rattus norvegicus (Rat).